Consider the following 476-residue polypeptide: Bifunctional protein HldE (476 aa).

A ribokinase region spans residues 1-320 (MQNPHIPSFA…RAVHQEGGSG (320 aa)). 196–199 (NLSE) lines the ATP pocket. Asp265 is a catalytic residue. The tract at residues 345–476 (FTNGCFDIIH…KIVERIREKD (132 aa)) is cytidylyltransferase.

The protein in the N-terminal section; belongs to the carbohydrate kinase PfkB family. This sequence in the C-terminal section; belongs to the cytidylyltransferase family. In terms of assembly, homodimer.

It carries out the reaction D-glycero-beta-D-manno-heptose 7-phosphate + ATP = D-glycero-beta-D-manno-heptose 1,7-bisphosphate + ADP + H(+). It catalyses the reaction D-glycero-beta-D-manno-heptose 1-phosphate + ATP + H(+) = ADP-D-glycero-beta-D-manno-heptose + diphosphate. It functions in the pathway nucleotide-sugar biosynthesis; ADP-L-glycero-beta-D-manno-heptose biosynthesis; ADP-L-glycero-beta-D-manno-heptose from D-glycero-beta-D-manno-heptose 7-phosphate: step 1/4. It participates in nucleotide-sugar biosynthesis; ADP-L-glycero-beta-D-manno-heptose biosynthesis; ADP-L-glycero-beta-D-manno-heptose from D-glycero-beta-D-manno-heptose 7-phosphate: step 3/4. Functionally, catalyzes the phosphorylation of D-glycero-D-manno-heptose 7-phosphate at the C-1 position to selectively form D-glycero-beta-D-manno-heptose-1,7-bisphosphate. Catalyzes the ADP transfer from ATP to D-glycero-beta-D-manno-heptose 1-phosphate, yielding ADP-D-glycero-beta-D-manno-heptose. This chain is Bifunctional protein HldE, found in Alcanivorax borkumensis (strain ATCC 700651 / DSM 11573 / NCIMB 13689 / SK2).